Here is a 158-residue protein sequence, read N- to C-terminus: NAD(P)H-quinone oxidoreductase subunit J, chloroplastic (158 aa).

The protein belongs to the complex I 30 kDa subunit family. In terms of assembly, NDH is composed of at least 16 different subunits, 5 of which are encoded in the nucleus.

It is found in the plastid. The protein localises to the chloroplast thylakoid membrane. It carries out the reaction a plastoquinone + NADH + (n+1) H(+)(in) = a plastoquinol + NAD(+) + n H(+)(out). The enzyme catalyses a plastoquinone + NADPH + (n+1) H(+)(in) = a plastoquinol + NADP(+) + n H(+)(out). Functionally, NDH shuttles electrons from NAD(P)H:plastoquinone, via FMN and iron-sulfur (Fe-S) centers, to quinones in the photosynthetic chain and possibly in a chloroplast respiratory chain. The immediate electron acceptor for the enzyme in this species is believed to be plastoquinone. Couples the redox reaction to proton translocation, and thus conserves the redox energy in a proton gradient. In Solanum bulbocastanum (Wild potato), this protein is NAD(P)H-quinone oxidoreductase subunit J, chloroplastic.